A 299-amino-acid polypeptide reads, in one-letter code: Acetylglutamate kinase (299 aa).

Substrate is bound by residues G64 to G65, R86, and N197.

This sequence belongs to the acetylglutamate kinase family. ArgB subfamily.

It is found in the cytoplasm. It carries out the reaction N-acetyl-L-glutamate + ATP = N-acetyl-L-glutamyl 5-phosphate + ADP. Its pathway is amino-acid biosynthesis; L-arginine biosynthesis; N(2)-acetyl-L-ornithine from L-glutamate: step 2/4. Its function is as follows. Catalyzes the ATP-dependent phosphorylation of N-acetyl-L-glutamate. This Sulfurihydrogenibium sp. (strain YO3AOP1) protein is Acetylglutamate kinase.